Here is a 563-residue protein sequence, read N- to C-terminus: AP-1-like transcription factor yap1 (563 aa).

The interval 23-179 (LAALSSNQPP…AFRERKEKHL (157 aa)) is disordered. The Bipartite nuclear localization signal signature appears at 35–42 (QQNDKQRS). Residues 36–48 (QNDKQRSQAKTDP) are compositionally biased toward basic and acidic residues. Low complexity predominate over residues 52 to 67 (PGNMSSGSFSMSPGFN). The short motif at 68–75 (KTHPGSGG) is the Bipartite nuclear localization signal element. Positions 79–94 (GDDESPFLDFNPELDF) are enriched in acidic residues. Composition is skewed to basic and acidic residues over residues 112 to 144 (SEEH…DKAA) and 170 to 179 (AFRERKEKHL). A bZIP domain is found at 154–217 (SEPTSKRKAQ…ERLQVELREY (64 aa)). Residues 159–180 (KRKAQNRAAQRAFRERKEKHLK) form a basic motif region. The tract at residues 182 to 189 (LETKVDEL) is leucine-zipper. A transcription activation 1 region spans residues 211-332 (QVELREYRKR…PSPKVPSVYN (122 aa)). Disordered regions lie at residues 267–380 (IFNG…KLND) and 394–420 (DAVR…TPGP). A n-CRD region spans residues 284–296 (SSPATSDSQVPGV). The segment covering 300-309 (ETLNGSNNRG) has biased composition (polar residues). The span at 336-362 (SASSHDSSNSCSPSSSSDSHQSQMLSS) shows a compositional bias: low complexity. Polar residues-rich tracts occupy residues 363–380 (NGTS…KLND) and 401–416 (ESVS…NYEQ). Positions 377-459 (KLNDSVQNHH…SQDFGTFFDD (83 aa)) are transcription activation 2. 3 disulfides stabilise this stretch: C510–C534, C510–C543, and C534–C543. Residues 510 to 543 (CTKIWDRLQSMEKFRNGEIDVDNLCSELRTKARC) are c-CRD. A Nuclear export signal motif is present at residues 528 to 535 (IDVDNLCS).

The protein belongs to the bZIP family. YAP subfamily. Depending on the oxidative stress inducing agent, yap1 can undergo two distinct conformational changes, both involving disulfide bond formation, and both masking the nuclear export signal, thus abolishing nuclear export.

Its subcellular location is the nucleus. It localises to the cytoplasm. Its function is as follows. Transcription activator involved in oxidative stress response and redox homeostasis. Regulates the transcription of genes encoding antioxidant enzymes and components of the cellular thiol-reducing pathways. The sequence is that of AP-1-like transcription factor yap1 from Aspergillus oryzae (strain ATCC 42149 / RIB 40) (Yellow koji mold).